The primary structure comprises 1019 residues: Alpha-mannosidase At3g26720 (1019 aa).

Residues 1–22 (MAVKCFSLYLILAAIVIGGVTS) form the signal peptide. The Zn(2+) site is built by histidine 47 and aspartate 49. Asparagine 64 carries an N-linked (GlcNAc...) asparagine glycan. A Zn(2+)-binding site is contributed by aspartate 169. N-linked (GlcNAc...) asparagine glycosylation is found at asparagine 278 and asparagine 336. Histidine 410 provides a ligand contact to Zn(2+). Cysteines 466 and 474 form a disulfide. Residues asparagine 470, asparagine 638, asparagine 730, and asparagine 820 are each glycosylated (N-linked (GlcNAc...) asparagine). Cysteine 824 and cysteine 829 form a disulfide bridge.

The protein belongs to the glycosyl hydrolase 38 family. As to quaternary structure, homodimer. Zn(2+) serves as cofactor.

It carries out the reaction Hydrolysis of terminal, non-reducing alpha-D-mannose residues in alpha-D-mannosides.. Liberates mannose from p-nitrophenyl-alpha-D-mannoside in vitro. This Arabidopsis thaliana (Mouse-ear cress) protein is Alpha-mannosidase At3g26720.